Here is a 237-residue protein sequence, read N- to C-terminus: uncharacterized protein (237 aa).

The signal sequence occupies residues M1–A28.

This is an uncharacterized protein from Sinorhizobium fredii (strain NBRC 101917 / NGR234).